The primary structure comprises 301 residues: GTP cyclohydrolase FolE2 (301 aa).

The protein belongs to the GTP cyclohydrolase IV family.

It catalyses the reaction GTP + H2O = 7,8-dihydroneopterin 3'-triphosphate + formate + H(+). It participates in cofactor biosynthesis; 7,8-dihydroneopterin triphosphate biosynthesis; 7,8-dihydroneopterin triphosphate from GTP: step 1/1. In terms of biological role, converts GTP to 7,8-dihydroneopterin triphosphate. The polypeptide is GTP cyclohydrolase FolE2 (Exiguobacterium sibiricum (strain DSM 17290 / CCUG 55495 / CIP 109462 / JCM 13490 / 255-15)).